Reading from the N-terminus, the 375-residue chain is Growth/differentiation factor 8 (375 aa).

An N-terminal signal peptide occupies residues M1–A18. Residues G19 to R266 constitute a propeptide that is removed on maturation. Residue N71 is glycosylated (N-linked (GlcNAc...) asparagine). Intrachain disulfides connect C272/C282, C281/C340, C309/C372, and C313/C374.

This sequence belongs to the TGF-beta family. In terms of assembly, homodimer; disulfide-linked. Interacts with WFIKKN2, leading to inhibit its activity. Interacts with FSTL3. Post-translationally, synthesized as large precursor molecule that undergoes proteolytic cleavage to generate an N-terminal propeptide and a disulfide linked C-terminal dimer, which is the biologically active molecule. The circulating form consists of a latent complex of the C-terminal dimer and other proteins, including its propeptide, which maintain the C-terminal dimer in a latent, inactive state. Ligand activation requires additional cleavage of the prodomain by a tolloid-like metalloproteinase.

It localises to the secreted. Its function is as follows. Acts specifically as a negative regulator of skeletal muscle growth. The polypeptide is Growth/differentiation factor 8 (MSTN) (Lepus capensis (Brown hare)).